Reading from the N-terminus, the 227-residue chain is Cytochrome c oxidase subunit 2 (227 aa).

At 1–26 (MATWSNLSLQDGASPLMEQLSFFHDH) the chain is on the mitochondrial intermembrane side. A helical transmembrane segment spans residues 27 to 48 (TMIDLLLITMIVGYSLSYMLLT). The Mitochondrial matrix portion of the chain corresponds to 49-62 (KYTNRNMLHGHLIE). The chain crosses the membrane as a helical span at residues 63–82 (TIWTALPAITLIFIALPSLR). Topologically, residues 83 to 227 (LLYLLDDSSD…LFIKWLSNMM (145 aa)) are mitochondrial intermembrane. The Cu cation site is built by H161, C196, E198, C200, H204, and M207. A Mg(2+)-binding site is contributed by E198.

The protein belongs to the cytochrome c oxidase subunit 2 family. Component of the cytochrome c oxidase (complex IV, CIV), a multisubunit enzyme composed of a catalytic core of 3 subunits and several supernumerary subunits. The complex exists as a monomer or a dimer and forms supercomplexes (SCs) in the inner mitochondrial membrane with ubiquinol-cytochrome c oxidoreductase (cytochrome b-c1 complex, complex III, CIII). Cu cation serves as cofactor.

Its subcellular location is the mitochondrion inner membrane. The enzyme catalyses 4 Fe(II)-[cytochrome c] + O2 + 8 H(+)(in) = 4 Fe(III)-[cytochrome c] + 2 H2O + 4 H(+)(out). Functionally, component of the cytochrome c oxidase, the last enzyme in the mitochondrial electron transport chain which drives oxidative phosphorylation. The respiratory chain contains 3 multisubunit complexes succinate dehydrogenase (complex II, CII), ubiquinol-cytochrome c oxidoreductase (cytochrome b-c1 complex, complex III, CIII) and cytochrome c oxidase (complex IV, CIV), that cooperate to transfer electrons derived from NADH and succinate to molecular oxygen, creating an electrochemical gradient over the inner membrane that drives transmembrane transport and the ATP synthase. Cytochrome c oxidase is the component of the respiratory chain that catalyzes the reduction of oxygen to water. Electrons originating from reduced cytochrome c in the intermembrane space (IMS) are transferred via the dinuclear copper A center (CU(A)) of subunit 2 and heme A of subunit 1 to the active site in subunit 1, a binuclear center (BNC) formed by heme A3 and copper B (CU(B)). The BNC reduces molecular oxygen to 2 water molecules using 4 electrons from cytochrome c in the IMS and 4 protons from the mitochondrial matrix. This Locusta migratoria (Migratory locust) protein is Cytochrome c oxidase subunit 2 (COII).